We begin with the raw amino-acid sequence, 404 residues long: Methyltransferase-like protein 22 (404 aa).

Disordered stretches follow at residues 60 to 102 (TDSG…SLQA) and 115 to 145 (QLDE…DKVH). The span at 68–78 (SHRDVHTKEPP) shows a compositional bias: basic and acidic residues. Residues 79–88 (SAETGSTGSP) are compositionally biased toward low complexity. S132 is modified (phosphoserine).

Belongs to the methyltransferase superfamily. METTL22 family. As to quaternary structure, interacts with members of the heat shock protein 90 and 70 families; these proteins probably are methylation substrates.

It localises to the nucleus. The enzyme catalyses L-lysyl-[protein] + 3 S-adenosyl-L-methionine = N(6),N(6),N(6)-trimethyl-L-lysyl-[protein] + 3 S-adenosyl-L-homocysteine + 3 H(+). Functionally, protein N-lysine methyltransferase. Trimethylates KIN at Lys-135 (in vitro). This Homo sapiens (Human) protein is Methyltransferase-like protein 22 (METTL22).